A 351-amino-acid chain; its full sequence is UDP-3-O-acylglucosamine N-acyltransferase (351 aa).

Histidine 257 functions as the Proton acceptor in the catalytic mechanism.

It belongs to the transferase hexapeptide repeat family. LpxD subfamily. As to quaternary structure, homotrimer.

The enzyme catalyses a UDP-3-O-[(3R)-3-hydroxyacyl]-alpha-D-glucosamine + a (3R)-hydroxyacyl-[ACP] = a UDP-2-N,3-O-bis[(3R)-3-hydroxyacyl]-alpha-D-glucosamine + holo-[ACP] + H(+). It functions in the pathway bacterial outer membrane biogenesis; LPS lipid A biosynthesis. Its function is as follows. Catalyzes the N-acylation of UDP-3-O-acylglucosamine using 3-hydroxyacyl-ACP as the acyl donor. Is involved in the biosynthesis of lipid A, a phosphorylated glycolipid that anchors the lipopolysaccharide to the outer membrane of the cell. The polypeptide is UDP-3-O-acylglucosamine N-acyltransferase (Brucella abortus (strain S19)).